We begin with the raw amino-acid sequence, 611 residues long: Probable potassium transport system protein Kup 1 (611 aa).

The next 12 helical transmembrane spans lie at 6-26 (LMVG…LYTM), 44-64 (MLSL…VAVV), 90-110 (LGVI…GAIT), 129-149 (ISPY…ALQA), 158-178 (LFGP…LFGI), 193-213 (GLSY…AVFL), 237-257 (WYGL…AVVV), 280-300 (LVAL…SGAF), 328-348 (IYIG…TLGF), 354-374 (LAAA…ILMF), 385-405 (LAAS…FVSA), and 410-430 (VLEG…LMMT).

It belongs to the HAK/KUP transporter (TC 2.A.72) family.

The protein resides in the cell inner membrane. The catalysed reaction is K(+)(in) + H(+)(in) = K(+)(out) + H(+)(out). Transport of potassium into the cell. Likely operates as a K(+):H(+) symporter. The polypeptide is Probable potassium transport system protein Kup 1 (Bradyrhizobium sp. (strain BTAi1 / ATCC BAA-1182)).